We begin with the raw amino-acid sequence, 188 residues long: Large ribosomal subunit protein bL32m (188 aa).

The Zn(2+) site is built by Cys-110, Cys-113, Cys-123, and Cys-126. The disordered stretch occupies residues 164 to 188; sequence TPSEQDQGKRIIERDRKRPSWFTQN. Residues 169 to 181 are compositionally biased toward basic and acidic residues; the sequence is DQGKRIIERDRKR.

It belongs to the bacterial ribosomal protein bL32 family. Component of the mitochondrial large ribosomal subunit (mt-LSU). Mature mammalian 55S mitochondrial ribosomes consist of a small (28S) and a large (39S) subunit. The 28S small subunit contains a 12S ribosomal RNA (12S mt-rRNA) and 30 different proteins. The 39S large subunit contains a 16S rRNA (16S mt-rRNA), a copy of mitochondrial valine transfer RNA (mt-tRNA(Val)), which plays an integral structural role, and 52 different proteins. bL32m has a zinc binding site. MRPL32 precursor is processed by the m-AAA protease (composed of AFG3L2 and SPG7), which cleaves the N-terminal transit peptide. Cleavage by the m-AAA protease takes place prior to assembly into the large subunit, an essential step for mitochondrial ribosome (mitoribosome) assembly. Proper processing by the m-AAA protease is dependent on the zinc-binding region within the tightly folded C-terminal domain of MRPL32: zinc-dependent folding halts degradation initiated from the N-terminus and triggers the release of mature MRPL32.

It is found in the mitochondrion. Its function is as follows. Component of the mitochondrial large ribosomal subunit (mt-LSU). The mitochondrial ribosome (mitoribosome) is a large ribonucleoprotein complex responsible for the synthesis of proteins inside mitochondria. The sequence is that of Large ribosomal subunit protein bL32m (MRPL32) from Homo sapiens (Human).